Here is a 212-residue protein sequence, read N- to C-terminus: Thiamine-phosphate synthase (212 aa).

4-amino-2-methyl-5-(diphosphooxymethyl)pyrimidine is bound by residues 40–44 (QFREK) and Asn75. Mg(2+)-binding residues include Asp76 and Asp95. Ser113 contributes to the 4-amino-2-methyl-5-(diphosphooxymethyl)pyrimidine binding site. A 2-[(2R,5Z)-2-carboxy-4-methylthiazol-5(2H)-ylidene]ethyl phosphate-binding site is contributed by 139–141 (TSS). Lys142 lines the 4-amino-2-methyl-5-(diphosphooxymethyl)pyrimidine pocket. Residues Gly171 and 191–192 (IS) each bind 2-[(2R,5Z)-2-carboxy-4-methylthiazol-5(2H)-ylidene]ethyl phosphate.

It belongs to the thiamine-phosphate synthase family. Requires Mg(2+) as cofactor.

The catalysed reaction is 2-[(2R,5Z)-2-carboxy-4-methylthiazol-5(2H)-ylidene]ethyl phosphate + 4-amino-2-methyl-5-(diphosphooxymethyl)pyrimidine + 2 H(+) = thiamine phosphate + CO2 + diphosphate. The enzyme catalyses 2-(2-carboxy-4-methylthiazol-5-yl)ethyl phosphate + 4-amino-2-methyl-5-(diphosphooxymethyl)pyrimidine + 2 H(+) = thiamine phosphate + CO2 + diphosphate. It catalyses the reaction 4-methyl-5-(2-phosphooxyethyl)-thiazole + 4-amino-2-methyl-5-(diphosphooxymethyl)pyrimidine + H(+) = thiamine phosphate + diphosphate. It participates in cofactor biosynthesis; thiamine diphosphate biosynthesis; thiamine phosphate from 4-amino-2-methyl-5-diphosphomethylpyrimidine and 4-methyl-5-(2-phosphoethyl)-thiazole: step 1/1. In terms of biological role, condenses 4-methyl-5-(beta-hydroxyethyl)thiazole monophosphate (THZ-P) and 2-methyl-4-amino-5-hydroxymethyl pyrimidine pyrophosphate (HMP-PP) to form thiamine monophosphate (TMP). The polypeptide is Thiamine-phosphate synthase (Staphylococcus epidermidis (strain ATCC 35984 / DSM 28319 / BCRC 17069 / CCUG 31568 / BM 3577 / RP62A)).